We begin with the raw amino-acid sequence, 35 residues long: Alpha-amanitin proprotein (35 aa).

Positions methionine 1 to proline 10 are excised as a propeptide. Isoleucine 11 bears the (3R,4R)-4,5-dihydroxyisoleucine; in form alpha-amanitin mark. Isoleucine 11 carries the post-translational modification (3R,4S)-4-hydroxyisoleucine; in form gamma-amanitin. The segment at residues isoleucine 11–proline 18 is a cross-link (cyclopeptide (Ile-Pro)). A cross-link (2'-cysteinyl-6'-hydroxytryptophan sulfoxide (Trp-Cys)) is located at residues tryptophan 12 to cysteine 16. Proline 18 bears the 4-hydroxyproline mark. The propeptide occupies cysteine 19 to cysteine 35.

It belongs to the MSDIN fungal toxin family. In terms of processing, processed by the macrocyclase-peptidase enzyme POPB to yield a toxic cyclic decapeptide. POPB first removes 10 residues from the N-terminus. Conformational trapping of the remaining peptide forces the enzyme to release this intermediate rather than proceed to macrocyclization. The enzyme rebinds the remaining peptide in a different conformation and catalyzes macrocyclization of the N-terminal 8 residues.

Its function is as follows. Major toxin belonging to the bicyclic octapeptides amatoxins that acts by binding non-competitively to RNA polymerase II and greatly slowing the elongation of transcripts from target promoters. This Amanita bisporigera (Destroying angel) protein is Alpha-amanitin proprotein.